The sequence spans 387 residues: Alkanesulfonate monooxygenase (387 aa).

The protein belongs to the SsuD family.

The enzyme catalyses an alkanesulfonate + FMNH2 + O2 = an aldehyde + FMN + sulfite + H2O + 2 H(+). Functionally, catalyzes the desulfonation of aliphatic sulfonates. The protein is Alkanesulfonate monooxygenase of Cupriavidus necator (strain ATCC 17699 / DSM 428 / KCTC 22496 / NCIMB 10442 / H16 / Stanier 337) (Ralstonia eutropha).